The sequence spans 255 residues: Triosephosphate isomerase (255 aa).

9 to 11 lines the substrate pocket; sequence NWK. The active-site Electrophile is His95. Glu167 (proton acceptor) is an active-site residue. Residues Gly173, Ser212, and 233–234 contribute to the substrate site; that span reads GG.

The protein belongs to the triosephosphate isomerase family. Homodimer.

The protein localises to the cytoplasm. The enzyme catalyses D-glyceraldehyde 3-phosphate = dihydroxyacetone phosphate. It participates in carbohydrate biosynthesis; gluconeogenesis. The protein operates within carbohydrate degradation; glycolysis; D-glyceraldehyde 3-phosphate from glycerone phosphate: step 1/1. In terms of biological role, involved in the gluconeogenesis. Catalyzes stereospecifically the conversion of dihydroxyacetone phosphate (DHAP) to D-glyceraldehyde-3-phosphate (G3P). This is Triosephosphate isomerase from Salmonella dublin (strain CT_02021853).